The following is a 258-amino-acid chain: NAD kinase (258 aa).

The active-site Proton acceptor is the aspartate 45. Residues aspartate 45–glycine 46, asparagine 117–glutamate 118, aspartate 147, alanine 155, threonine 158–serine 163, and alanine 182 contribute to the NAD(+) site.

Belongs to the NAD kinase family. It depends on a divalent metal cation as a cofactor.

It is found in the cytoplasm. It catalyses the reaction NAD(+) + ATP = ADP + NADP(+) + H(+). Its function is as follows. Involved in the regulation of the intracellular balance of NAD and NADP, and is a key enzyme in the biosynthesis of NADP. Catalyzes specifically the phosphorylation on 2'-hydroxyl of the adenosine moiety of NAD to yield NADP. The protein is NAD kinase of Xanthomonas oryzae pv. oryzae (strain MAFF 311018).